Reading from the N-terminus, the 391-residue chain is MAGRSLCLTRSSVPGTPFPPPVQQPSTPGPDLLALEEEYKRLNAELQAKTADVVQQAKEIIRDRQEVRSRPVSTQMKSCDDEDDYSLRGLLPSEGIVHLHSETKPKTKNIDPVNKVQNKLHSANKGRKTNSSVKLKYSDVQTADDVAIPEDFSDFSLAKTISKIEGQLEEEGLPEYIDDIFSGVSNDIGTEAQIRFLKAKLHVMQEELDNVVCECNKKEDEIQNLKSQVKNFEEDFMRQQRTINMQQSQVEKYKTLFEEANKKYDGLQQQLSSVERELENKRRLQKQAASSQSATEVRLNRALEEAEKYKLELSKLRQNNKDIANEEHKKIEVLKSENKKLEKQKGELMIGFKKQLKLIDVLKRQKMHIEAAKMLSFTEEEFMKALEWGNS.

Disordered regions lie at residues 1 to 31 and 65 to 85; these read MAGR…PGPD and QEVR…EDDY. Residues 188 to 351 adopt a coiled-coil conformation; the sequence is IGTEAQIRFL…EKQKGELMIG (164 aa).

The protein resides in the cytoplasm. The protein localises to the cytoskeleton. It localises to the microtubule organizing center. It is found in the centrosome. Its subcellular location is the centriolar satellite. The chain is Testis-expressed protein 9 (TEX9) from Homo sapiens (Human).